Consider the following 137-residue polypeptide: NADH-quinone oxidoreductase subunit A (137 aa).

3 helical membrane-spanning segments follow: residues 12-32, 66-86, and 95-115; these read WGFAIFLLGVVGLCAFMLGLS, FYLVAMLFVIFDIEALFLFAW, and WTGFVEALVFIAILLAGLVYL.

This sequence belongs to the complex I subunit 3 family. NDH-1 is composed of 13 different subunits. Subunits NuoA, H, J, K, L, M, N constitute the membrane sector of the complex.

Its subcellular location is the cell inner membrane. It carries out the reaction a quinone + NADH + 5 H(+)(in) = a quinol + NAD(+) + 4 H(+)(out). Its function is as follows. NDH-1 shuttles electrons from NADH, via FMN and iron-sulfur (Fe-S) centers, to quinones in the respiratory chain. The immediate electron acceptor for the enzyme in this species is believed to be ubiquinone. Couples the redox reaction to proton translocation (for every two electrons transferred, four hydrogen ions are translocated across the cytoplasmic membrane), and thus conserves the redox energy in a proton gradient. The protein is NADH-quinone oxidoreductase subunit A of Pseudomonas putida (strain ATCC 700007 / DSM 6899 / JCM 31910 / BCRC 17059 / LMG 24140 / F1).